Consider the following 1028-residue polypeptide: Unconventional myosin-Ic (1028 aa).

Met-1 carries the N-acetylmethionine modification. The region spanning 12 to 696 (GVQDFVLLEN…TLFATEDALE (685 aa)) is the Myosin motor domain. Residues Asn-53, Tyr-61, 104–113 (SGESGAGKTE), and 157–161 (NDNSS) contribute to the ATP site. Lys-348 bears the N6-methyllysine mark. The segment at 573–595 (LSKLMEILMSKQPSYVRCIKPND) is actin-binding. IQ domains follow at residues 699 to 728 (KHSI…SAVE) and 722 to 751 (MKHS…AVDV). Residues 850–1024 (KDNYPQSVPR…NGHLSVVAPR (175 aa)) enclose the TH1 domain.

Belongs to the TRAFAC class myosin-kinesin ATPase superfamily. Myosin family. Interacts (via its IQ motifs) with calmodulin. In terms of tissue distribution, expressed in brain and the sacculus of the internal ear.

It is found in the cytoplasm. The protein localises to the cell membrane. It localises to the cell projection. The protein resides in the ruffle membrane. Its subcellular location is the cytoplasmic vesicle. It is found in the stereocilium membrane. In terms of biological role, myosins are actin-based motor molecules with ATPase activity. Unconventional myosins serve in intracellular movements. Their highly divergent tails are presumed to bind to membranous compartments, which would be moved relative to actin filaments. In Aquarana catesbeiana (American bullfrog), this protein is Unconventional myosin-Ic (Myo1c).